Consider the following 517-residue polypeptide: Superoxide-generating NADPH oxidase heavy chain subunit A (517 aa).

Residues 1–19 are Cytoplasmic-facing; sequence MRLPTKEEIQRYWVNEGNK. A helical transmembrane segment spans residues 20-40; it reads LILVILYTLGNIAAFVYTFVH. Topologically, residues 41–62 are extracellular; that stretch reads YYNSPAFEVVGYGVCFARGCAQ. The 144-residue stretch at 58–201 folds into the Ferric oxidoreductase domain; the sequence is RGCAQLLKLN…LFVVFFGLLV (144 aa). Residues 63–83 form a helical membrane-spanning segment; it reads LLKLNCALILVPVLRNLLSFL. Residues 84–97 are Cytoplasmic-facing; sequence RGTFLNNYVPFDKN. Residues 98–118 form a helical membrane-spanning segment; sequence IVFHKLIAWVICFATFGHVMA. Positions 101 and 115 each coordinate heme. At 119-149 the chain is on the extracellular side; that stretch reads HFNNFRLYQDITPQEYKRILGIDYPNLTPIK. Residues 150 to 170 traverse the membrane as a helical segment; sequence YAFATLAGWTGHVVCIVMVLM. Over 171 to 184 the chain is Cytoplasmic; sequence YTSAVESIRRPMFE. A helical membrane pass occupies residues 185–205; the sequence is GFWYTHHLFVVFFGLLVVHGL. Heme contacts are provided by histidine 190 and histidine 203. Position 206 (histidine 206) is a topological domain, extracellular. The helical transmembrane segment at 207-227 threads the bilayer; sequence SILEPTSFWKWVIGPCALYIV. The Cytoplasmic portion of the chain corresponds to 228 to 517; the sequence is ERLIRLLRSK…CRFHYNKENF (290 aa). The region spanning 229 to 349 is the FAD-binding FR-type domain; it reads RLIRLLRSKK…DGPFGAASEE (121 aa). FAD is bound at residue 283-289; the sequence is HPFTITS.

Composed of a heavy chain and a light chain. Requires FAD as cofactor.

The protein localises to the membrane. Its function is as follows. Critical component of the membrane-bound oxidase that generates superoxide. It is the terminal component of a respiratory chain that transfers single electrons from cytoplasmic NADPH across the plasma membrane to molecular oxygen on the exterior. This is Superoxide-generating NADPH oxidase heavy chain subunit A (noxA) from Dictyostelium discoideum (Social amoeba).